Consider the following 1496-residue polypeptide: Carbamoyl-phosphate synthase [ammonia], mitochondrial (1496 aa).

The N-terminal 33 residues, 1–33 (MTRILSVFKTAKTGVLNAAAHRYRGFSKAGVRL), are a transit peptide targeting the mitochondrion. The segment at 34–214 (MSVKAQTANL…TKVFGKGNPV (181 aa)) is anthranilate phosphoribosyltransferase homolog. A Glutamine amidotransferase type-1 domain is found at 215–401 (RIVAVDCGVK…MSLIKKGKGT (187 aa)). Residue cysteine 290 is the For GATase activity of the active site. ATP-grasp domains lie at 548 to 740 (SDKL…KIAL) and 1090 to 1281 (SAVL…KVMI). The 145-residue stretch at 1352 to 1496 (FKLPQKGILI…YRQFGGAKPS (145 aa)) folds into the MGS-like domain. Threonine 1388, threonine 1391, tryptophan 1407, asparagine 1433, asparagine 1436, and asparagine 1445 together coordinate N-acetyl-L-glutamate.

The protein localises to the mitochondrion. It carries out the reaction hydrogencarbonate + NH4(+) + 2 ATP = carbamoyl phosphate + 2 ADP + phosphate + 2 H(+). With respect to regulation, requires N-acetyl-L-glutamate (NAG) as an allosteric activator. Involved in the urea cycle of ureotelic animals where the enzyme plays an important role in removing excess ammonia from the cell. The chain is Carbamoyl-phosphate synthase [ammonia], mitochondrial from Aquarana catesbeiana (American bullfrog).